A 222-amino-acid polypeptide reads, in one-letter code: MNKILSLFLITILLISKVMSSSEECKLCTDFMYDSLNELIEIAINGGVIGSCGALCNKLGIAPLCMVCAIACDAVGINGFMDLLQDVFPDPIYICESVKMCQYNDKANATITEVVINPMSGNVGDTFKIGVSFNVTNTIATGEILWNVVDPRGFQFGETEVIIDAAPSIYGAAFSFQATPSEQEEFPPGEYQLQMQICEGTCGSPHPHSYILSNQYLNFTII.

Positions 1–20 are cleaved as a signal peptide; sequence MNKILSLFLITILLISKVMS. Residues 21 to 105 enclose the Saposin B-type domain; that stretch reads SSEECKLCTD…ESVKMCQYND (85 aa). 3 disulfide bridges follow: Cys25/Cys101, Cys28/Cys95, and Cys56/Cys68. Residues Asn108, Asn134, and Asn218 are each glycosylated (N-linked (GlcNAc...) asparagine).

The protein belongs to the countin family.

Its subcellular location is the secreted. Functionally, may control the size of the multicellular structure. The polypeptide is Countin-3 (ctnC) (Dictyostelium discoideum (Social amoeba)).